Consider the following 706-residue polypeptide: Cyclic nucleotide-gated ion channel 18 (706 aa).

Residues 1 to 53 (MNKIRSLRCLLPETITSASTAASNRGSDGSQFSVLWRHQILDPDSNIVTYWNH) are Cytoplasmic-facing. Residues 54–74 (VFLITSILALFLDPFYFYVPY) form a helical membrane-spanning segment. At 75-86 (VGGPACLSIDIS) the chain is on the extracellular side. The helical transmembrane segment at 87-107 (LAATVTFFRTVADIFHLLHIF) threads the bilayer. The Cytoplasmic portion of the chain corresponds to 108-142 (MKFRTAFVARSSRVFGRGELVMDSREIAMRYLKTD). A helical membrane pass occupies residues 143-163 (FLIDVAAMLPLPQLVIWLVIP). Over 164 to 174 (AATNGTANHAN) the chain is Extracellular. A helical transmembrane segment spans residues 175–195 (STLALIVLVQYIPRSFIIFPL). Residues 196–217 (NQRIIKTTGFIAKTAWAGAAYN) are Cytoplasmic-facing. A helical transmembrane segment spans residues 218 to 238 (LLLYILASHVLGAMWYLSSIG). At 239 to 345 (RQFSCWSNVC…ITTSVYLGET (107 aa)) the chain is on the extracellular side. The chain crosses the membrane as a helical span at residues 346–366 (LFCITICIFGLILFTLLIGNM). At 367 to 706 (QSSLQSMSVR…PDFSIDKEDV (340 aa)) the chain is on the cytoplasmic side. Residues 449-579 (FFSQ…AFRY) and Glu520 contribute to the a nucleoside 3',5'-cyclic phosphate site. Residues 565–580 (FKRLQSKKLQHAFRYY) form a calmodulin-binding region. One can recognise an IQ domain in the interval 585–614 (RAWGACFVQSAWRRYKRRKLAKELSLHESS). The segment at 661–706 (ANTRRGTNQKASSSSTGKKDGSSTSLKMPQLFKPDEPDFSIDKEDV) is disordered. A compositionally biased stretch (basic and acidic residues) spans 693 to 706 (KPDEPDFSIDKEDV).

It belongs to the cyclic nucleotide-gated cation channel (TC 1.A.1.5) family. Homomultimer. Interacts with CPK32. In terms of tissue distribution, expressed in pollen grains. Not detected in leaves, roots or root hairs.

It localises to the cell membrane. The protein resides in the cytoplasmic vesicle membrane. Cyclic nucleotide-gated ion channel required for directional pollen tube growth into the transmitting tract. Acts as a Ca(2+)-permeable divalent cation-selective channel inhibited by either lanthanum or gadolinium. Regulated by CPK32 to mediate Ca(2+) transport across the plasma membrane in response to Ca(2+) oscillation. This is Cyclic nucleotide-gated ion channel 18 from Arabidopsis thaliana (Mouse-ear cress).